The following is a 349-amino-acid chain: MTELTLQNHRRTMWHFIPGLALSAVITGVALWGGAIPAVAGAGFSALTLAILLGMVIGNTVYPQIWKQCDGGVLFAKQHLLRLGIILYGFRLTFSQIADVGISGIVIDVLTLSSTFMLACFLGQKVFGLDRHTSWLIGAGSSICGAAAVLATEPVVKAEASKVTVAVATVVIFGTIAIFLYPAMYPLLAHWFSPETYGIYIGSTMHEVAQVVAAGHAVSPDAENAAVIAKMLRVMMLAPFLIILAARVKQLSPATGAEKSKITIPWFAIFFIVVAIFNSFHLLPKAVVDMLVTLDTVLLAMAMAALGLTTHVSALKKAGAKPLLMALALFAWLIIGGGAINVLIHSLIA.

At 1–12 (MTELTLQNHRRT) the chain is on the periplasmic side. Residues 13-35 (MWHFIPGLALSAVITGVALWGGA) traverse the membrane as a helical segment. At 36-38 (IPA) the chain is on the cytoplasmic side. A helical transmembrane segment spans residues 39–61 (VAGAGFSALTLAILLGMVIGNTV). At 62-99 (YPQIWKQCDGGVLFAKQHLLRLGIILYGFRLTFSQIAD) the chain is on the periplasmic side. The helical transmembrane segment at 100–122 (VGISGIVIDVLTLSSTFMLACFL) threads the bilayer. Over 123 to 131 (GQKVFGLDR) the chain is Cytoplasmic. Residues 132–151 (HTSWLIGAGSSICGAAAVLA) form a helical membrane-spanning segment. The Periplasmic portion of the chain corresponds to 152 to 162 (TEPVVKAEASK). Residues 163 to 185 (VTVAVATVVIFGTIAIFLYPAMY) form a helical membrane-spanning segment. Residues 186 to 261 (PLLAHWFSPE…SPATGAEKSK (76 aa)) are Cytoplasmic-facing. Residues 262-284 (ITIPWFAIFFIVVAIFNSFHLLP) traverse the membrane as a helical segment. The Periplasmic portion of the chain corresponds to 285–290 (KAVVDM). The chain crosses the membrane as a helical span at residues 291–313 (LVTLDTVLLAMAMAALGLTTHVS). Over 314-322 (ALKKAGAKP) the chain is Cytoplasmic. Residues 323–345 (LLMALALFAWLIIGGGAINVLIH) form a helical membrane-spanning segment. The Periplasmic portion of the chain corresponds to 346-349 (SLIA).

It belongs to the UPF0324 family.

It is found in the cell inner membrane. The polypeptide is UPF0324 inner membrane protein YeiH (yeiH) (Salmonella typhi).